Consider the following 251-residue polypeptide: MSKFQLEQMLRAGVHFGHLARRWSPKMKPYIFMEKNGVHIIDLKKTLVMADEALKAIEAIASTGREIMLVGTKKQAKVIIAEQAERAGMPYVCERWLGGMLTNFSTIRQSIRRMNAIDRMETDGTFDMITKKERLMLLREKDKLVRILGGIANMNRLPAALFVVDIKKEHIAIKEARSLGIPIFAMVDTNCDPDEVDYIIPANDDAIRSIELMVKAVADTIIEARSLQEEQEAIAEMDEQVEEDAEEASND.

The disordered stretch occupies residues 232–251 (EAIAEMDEQVEEDAEEASND).

The protein belongs to the universal ribosomal protein uS2 family.

The sequence is that of Small ribosomal subunit protein uS2 from Chlorobaculum parvum (strain DSM 263 / NCIMB 8327) (Chlorobium vibrioforme subsp. thiosulfatophilum).